Consider the following 85-residue polypeptide: SKP1-like protein 6 (85 aa).

Residues 65–85 (MMAANYLNIQSLLDLTFSNCR) are interaction with the F-box domain of F-box proteins.

This sequence belongs to the SKP1 family. Part of a SCF (SKP1-cullin-F-box) protein ligase complex.

The protein resides in the nucleus. It participates in protein modification; protein ubiquitination. Involved in ubiquitination and subsequent proteasomal degradation of target proteins. Together with CUL1, RBX1 and a F-box protein, it forms a SCF E3 ubiquitin ligase complex. The functional specificity of this complex depends on the type of F-box protein. In the SCF complex, it serves as an adapter that links the F-box protein to CUL1. This Arabidopsis thaliana (Mouse-ear cress) protein is SKP1-like protein 6 (ASK6).